The sequence spans 200 residues: MTIAKELKQKSNEELVKLVIKLKGELLEYRFKLAHGELDKPHLIAKVRKLLAVVLTILTERKLNWQVEKDKYKLLSRKTNELIVNSWKQKLSTKPESKQETKKAEVKPKVESKPESKQETKKAEVKPLKQETKKVEVKPKVEPKPLKQETKKVEARIETKTKVESKPLKQEVKKVEAKKSVSKPQKPVKAKMIKTKEKKQ.

The interval 1–107 (MTIAKELKQK…KQETKKAEVK (107 aa)) is large ribosomal subunit protein uL29. Residues 92–200 (STKPESKQET…KMIKTKEKKQ (109 aa)) form a disordered region. The span at 93–179 (TKPESKQETK…QEVKKVEAKK (87 aa)) shows a compositional bias: basic and acidic residues. Residues 108–200 (PKVESKPESK…KMIKTKEKKQ (93 aa)) are unknown. Residues 186–200 (KPVKAKMIKTKEKKQ) are compositionally biased toward basic residues.

This sequence belongs to the universal ribosomal protein uL29 family.

This is Large ribosomal subunit protein uL29 from Mycoplasma genitalium (strain ATCC 33530 / DSM 19775 / NCTC 10195 / G37) (Mycoplasmoides genitalium).